The sequence spans 1741 residues: Meiosis regulator and mRNA stability factor 1 (1741 aa).

Residues 345-482 enclose the NYN domain; the sequence is IGVFWDIENC…ALLHHAHELV (138 aa). Disordered stretches follow at residues 594 to 636, 659 to 678, and 683 to 716; these read KVKS…GSVI, TENH…SHAA, and LTTK…PVDK. Basic and acidic residues predominate over residues 659–668; that stretch reads TENHQEHLRE. Residues 788 to 867 form the RRM domain; it reads ADIQISNIDY…KRIQVSLATG (80 aa). HTH OST-type domains follow at residues 872 to 946, 1000 to 1076, 1097 to 1171, 1173 to 1248, 1257 to 1332, 1333 to 1408, 1409 to 1483, and 1484 to 1558; these read SLSL…SPLG, SLKT…HNKP, QLIQ…LTHR, QVKR…IPKR, RTKQ…TEVE, QVKA…INRK, SLRT…VRLT, and NLYM…LKND. The span at 1684–1700 shows a compositional bias: polar residues; that stretch reads KLTSGSVASSTAENTSV. Positions 1684 to 1727 are disordered; it reads KLTSGSVASSTAENTSVPPRHSSETQLNKEAMDSPAKKQHKNKV.

The protein localises to the peroxisome. Essential regulator of oogenesis required for female meiotic progression to repress transposable elements and preventing their mobilization, which is essential for the germline integrity. In Gallus gallus (Chicken), this protein is Meiosis regulator and mRNA stability factor 1.